We begin with the raw amino-acid sequence, 473 residues long: Cysteine--tRNA ligase (473 aa).

A Zn(2+)-binding site is contributed by cysteine 28. The short motif at 30-40 (MTVYDYCHLGH) is the 'HIGH' region element. Cysteine 209, histidine 234, and glutamate 238 together coordinate Zn(2+). Positions 282–286 (KMSKS) match the 'KMSKS' region motif. Lysine 285 lines the ATP pocket.

Belongs to the class-I aminoacyl-tRNA synthetase family. In terms of assembly, monomer. The cofactor is Zn(2+).

The protein localises to the cytoplasm. It catalyses the reaction tRNA(Cys) + L-cysteine + ATP = L-cysteinyl-tRNA(Cys) + AMP + diphosphate. In Neisseria meningitidis serogroup B (strain ATCC BAA-335 / MC58), this protein is Cysteine--tRNA ligase.